A 287-amino-acid polypeptide reads, in one-letter code: Protein PXR1 (287 aa).

The G-patch domain occupies 25-72 (TSRFGHLQLEKFGWKPGMGLGMSPTSSHKTHIKVSIKDDNLGLGAKIK). The span at 143–155 (LKSYSNDKKRSRD) shows a compositional bias: basic and acidic residues. A disordered region spans residues 143–254 (LKSYSNDKKR…TTASNIPSTV (112 aa)). Residues 163–190 (SKNKSKKQKKDKKDKKDKKDKKDKKDKK) are compositionally biased toward basic residues. The segment covering 191-200 (DKKDKTEKKE) has biased composition (basic and acidic residues). The span at 201-220 (KKEKKEKKEKKEKKDKKDKK) shows a compositional bias: basic residues. Residues 221-230 (DKKDKIDKKD) show a composition bias toward basic and acidic residues. The span at 239–251 (NNIEVSTTASNIP) shows a compositional bias: polar residues.

This sequence belongs to the PINX1 family.

The protein resides in the nucleus. It is found in the nucleolus. Its function is as follows. Involved in rRNA-processing at A0, A1 and A2 sites and negatively regulates telomerase. The sequence is that of Protein PXR1 (PXR1) from Vanderwaltozyma polyspora (strain ATCC 22028 / DSM 70294 / BCRC 21397 / CBS 2163 / NBRC 10782 / NRRL Y-8283 / UCD 57-17) (Kluyveromyces polysporus).